A 487-amino-acid chain; its full sequence is b(0,+)-type amino acid transporter 1 (487 aa).

The span at Met1 to Glu20 shows a compositional bias: basic and acidic residues. Positions Met1–Thr23 are disordered. At Met1 to Gly31 the chain is on the cytoplasmic side. Ser18 is subject to Phosphoserine. A helical membrane pass occupies residues Leu32–Val55. Residue Ile43–Gly47 participates in L-arginine binding. Residues Leu56–Val62 lie on the Extracellular side of the membrane. Residues Gly63–Ala84 form a helical membrane-spanning segment. Residues Glu85–Tyr110 are Cytoplasmic-facing. Residues Leu111–Cys137 traverse the membrane as a helical segment. Over Ala138–Pro147 the chain is Extracellular. Transmembrane regions (helical) follow at residues Ala148 to Ser169 and Val170 to Ile193. The Extracellular segment spans residues Ser194–Ser217. A helical membrane pass occupies residues Val218–Leu238. Asp233 contacts L-arginine. Residues Asn239–Asn251 are Cytoplasmic-facing. The helical transmembrane segment at Leu252–Tyr274 threads the bilayer. The Extracellular segment spans residues Phe275–Ser302. The helical transmembrane segment at Trp303–Gly325 threads the bilayer. At Arg326–Pro351 the chain is on the cytoplasmic side. The next 2 membrane-spanning stretches (helical) occupy residues Ala352–Asp370 and Ile371–Leu391. The Cytoplasmic portion of the chain corresponds to Gly392–Pro410. A helical membrane pass occupies residues Ile411–Ser431. Over Ser432–Ala434 the chain is Extracellular. Residues Trp435–Phe450 form a helical membrane-spanning segment. Topologically, residues Tyr451–Glu487 are cytoplasmic.

The protein belongs to the amino acid-polyamine-organocation (APC) superfamily. In terms of assembly, disulfide-linked heterodimer composed of the catalytic light chain subunit SLC7A9 and the heavy chain subunit SLC3A1. The heterodimer is the minimal functional unit. Assembles in heterotetramers (dimers of heterodimers) and higher order oligomers; the oligomerization is mediated by SLC3A1 likely to prevent degradation and facilitate heteromer trafficking to the plasma membrane. Interacts with CAV1. Outer medulla of kidney (at protein level). Kidney and small intestine. In the kidney localized to the apical membrane of the proximal tubules.

The protein localises to the apical cell membrane. It catalyses the reaction L-leucine(out) + L-arginine(in) = L-leucine(in) + L-arginine(out). It carries out the reaction L-histidine(out) + L-arginine(in) = L-histidine(in) + L-arginine(out). The enzyme catalyses L-arginine(in) + L-phenylalanine(out) = L-arginine(out) + L-phenylalanine(in). The catalysed reaction is L-cysteine(out) + L-arginine(in) = L-cysteine(in) + L-arginine(out). It catalyses the reaction L-cystine(out) + L-arginine(in) = L-cystine(in) + L-arginine(out). It carries out the reaction L-lysine(out) + L-arginine(in) = L-lysine(in) + L-arginine(out). In terms of biological role, associates with SLC3A1 to form a functional transporter complex that mediates the electrogenic exchange between cationic amino acids and neutral amino acids, with a stoichiometry of 1:1. Has system b(0,+)-like activity with high affinity for extracellular cationic amino acids and L-cystine and lower affinity for intracellular neutral amino acids. Substrate exchange is driven by high concentration of intracellular neutral amino acids and the intracellular reduction of L-cystine to L-cysteine. Required for reabsorption of L-cystine and dibasic amino acids across the brush border membrane in renal proximal tubules. The sequence is that of b(0,+)-type amino acid transporter 1 (Slc7a9) from Rattus norvegicus (Rat).